The following is a 233-amino-acid chain: Uridylate kinase (233 aa).

9-10 serves as a coordination point for ATP; the sequence is GS. Residue Gly-43 coordinates UMP. The ATP site is built by Gly-44 and Arg-48. Residues Asp-65 and 113–119 each bind UMP; that span reads VTPGQTT. The ATP site is built by Thr-139, Tyr-145, and Asp-148.

This sequence belongs to the UMP kinase family. As to quaternary structure, homohexamer.

It localises to the cytoplasm. It carries out the reaction UMP + ATP = UDP + ADP. Its pathway is pyrimidine metabolism; CTP biosynthesis via de novo pathway; UDP from UMP (UMPK route): step 1/1. Its activity is regulated as follows. Inhibited by UTP. In terms of biological role, catalyzes the reversible phosphorylation of UMP to UDP. The chain is Uridylate kinase from Methanosarcina mazei (strain ATCC BAA-159 / DSM 3647 / Goe1 / Go1 / JCM 11833 / OCM 88) (Methanosarcina frisia).